A 431-amino-acid chain; its full sequence is Trigger factor (431 aa).

The 86-residue stretch at Gly-158 to Pro-243 folds into the PPIase FKBP-type domain.

Belongs to the FKBP-type PPIase family. Tig subfamily.

The protein localises to the cytoplasm. It carries out the reaction [protein]-peptidylproline (omega=180) = [protein]-peptidylproline (omega=0). Involved in protein export. Acts as a chaperone by maintaining the newly synthesized protein in an open conformation. Functions as a peptidyl-prolyl cis-trans isomerase. This is Trigger factor from Stenotrophomonas maltophilia (strain R551-3).